Here is a 438-residue protein sequence, read N- to C-terminus: V-type ATP synthase beta chain (438 aa).

It belongs to the ATPase alpha/beta chains family.

Produces ATP from ADP in the presence of a proton gradient across the membrane. The V-type beta chain is a regulatory subunit. The protein is V-type ATP synthase beta chain (atpB) of Chlamydia trachomatis serovar D (strain ATCC VR-885 / DSM 19411 / UW-3/Cx).